Here is a 719-residue protein sequence, read N- to C-terminus: UvrABC system protein B (719 aa).

The region spanning Arg49–Ile435 is the Helicase ATP-binding domain. An ATP-binding site is contributed by Gly62 to Ser69. Positions Tyr115–Ile138 match the Beta-hairpin motif. The Helicase C-terminal domain occupies Gln453–Ile606. Positions Gly635–Ala654 are disordered. Positions Ala674–Glu709 constitute a UVR domain.

This sequence belongs to the UvrB family. Forms a heterotetramer with UvrA during the search for lesions. Interacts with UvrC in an incision complex.

It localises to the cytoplasm. In terms of biological role, the UvrABC repair system catalyzes the recognition and processing of DNA lesions. A damage recognition complex composed of 2 UvrA and 2 UvrB subunits scans DNA for abnormalities. Upon binding of the UvrA(2)B(2) complex to a putative damaged site, the DNA wraps around one UvrB monomer. DNA wrap is dependent on ATP binding by UvrB and probably causes local melting of the DNA helix, facilitating insertion of UvrB beta-hairpin between the DNA strands. Then UvrB probes one DNA strand for the presence of a lesion. If a lesion is found the UvrA subunits dissociate and the UvrB-DNA preincision complex is formed. This complex is subsequently bound by UvrC and the second UvrB is released. If no lesion is found, the DNA wraps around the other UvrB subunit that will check the other stand for damage. This Mycobacterium tuberculosis (strain CDC 1551 / Oshkosh) protein is UvrABC system protein B.